We begin with the raw amino-acid sequence, 1378 residues long: DNA-directed RNA polymerase subunit beta' (1378 aa).

Residues C69, C71, C84, and C87 each contribute to the Zn(2+) site. D460, D462, and D464 together coordinate Mg(2+). Zn(2+)-binding residues include C808, C882, C889, and C892.

Belongs to the RNA polymerase beta' chain family. The RNAP catalytic core consists of 2 alpha, 1 beta, 1 beta' and 1 omega subunit. When a sigma factor is associated with the core the holoenzyme is formed, which can initiate transcription. Mg(2+) serves as cofactor. Requires Zn(2+) as cofactor.

The enzyme catalyses RNA(n) + a ribonucleoside 5'-triphosphate = RNA(n+1) + diphosphate. Functionally, DNA-dependent RNA polymerase catalyzes the transcription of DNA into RNA using the four ribonucleoside triphosphates as substrates. This chain is DNA-directed RNA polymerase subunit beta', found in Rickettsia canadensis (strain McKiel).